Here is a 280-residue protein sequence, read N- to C-terminus: Ribonuclease Z (280 aa).

Zn(2+) is bound by residues histidine 61, histidine 63, aspartate 65, histidine 66, histidine 153, aspartate 176, and histidine 240. Aspartate 65 acts as the Proton acceptor in catalysis.

It belongs to the RNase Z family. As to quaternary structure, homodimer. Zn(2+) serves as cofactor.

The enzyme catalyses Endonucleolytic cleavage of RNA, removing extra 3' nucleotides from tRNA precursor, generating 3' termini of tRNAs. A 3'-hydroxy group is left at the tRNA terminus and a 5'-phosphoryl group is left at the trailer molecule.. Functionally, zinc phosphodiesterase, which displays some tRNA 3'-processing endonuclease activity. Probably involved in tRNA maturation, by removing a 3'-trailer from precursor tRNA. This is Ribonuclease Z from Mycobacterium bovis (strain BCG / Pasteur 1173P2).